Consider the following 82-residue polypeptide: Large ribosomal subunit protein bL27 (82 aa).

Positions 1–20 (MATKKAGGSSSNGRDSIGKR) are disordered.

The protein belongs to the bacterial ribosomal protein bL27 family.

In Neorickettsia sennetsu (strain ATCC VR-367 / Miyayama) (Ehrlichia sennetsu), this protein is Large ribosomal subunit protein bL27.